The chain runs to 255 residues: Leucyl/phenylalanyl-tRNA--protein transferase (255 aa).

The protein belongs to the L/F-transferase family.

It localises to the cytoplasm. The enzyme catalyses N-terminal L-lysyl-[protein] + L-leucyl-tRNA(Leu) = N-terminal L-leucyl-L-lysyl-[protein] + tRNA(Leu) + H(+). It carries out the reaction N-terminal L-arginyl-[protein] + L-leucyl-tRNA(Leu) = N-terminal L-leucyl-L-arginyl-[protein] + tRNA(Leu) + H(+). It catalyses the reaction L-phenylalanyl-tRNA(Phe) + an N-terminal L-alpha-aminoacyl-[protein] = an N-terminal L-phenylalanyl-L-alpha-aminoacyl-[protein] + tRNA(Phe). Functions in the N-end rule pathway of protein degradation where it conjugates Leu, Phe and, less efficiently, Met from aminoacyl-tRNAs to the N-termini of proteins containing an N-terminal arginine or lysine. This Burkholderia pseudomallei (strain 1106a) protein is Leucyl/phenylalanyl-tRNA--protein transferase.